Here is a 71-residue protein sequence, read N- to C-terminus: Small ribosomal subunit protein bS21B (71 aa).

It belongs to the bacterial ribosomal protein bS21 family.

The protein is Small ribosomal subunit protein bS21B of Rhizobium johnstonii (strain DSM 114642 / LMG 32736 / 3841) (Rhizobium leguminosarum bv. viciae).